The chain runs to 467 residues: MRLPRHIGPIHFVGIGGIGMSGIAEVLCNLGYTVQGSDASESANVNRLREKGIQIHVGHQADNIKGADVLVVSTAIKRDNPELLAARAQRIPVVRRAEMLAELMRLKSCVAIAGTHGKTTTTSMVAALLDAGDLDPTVINGGIINAYGTNARLGGGDWMVVEADESDGTFLKLPADVAIVTNVDPEHLDHFKTFDAVQDAFRNFVENVPFYGFAVMCIDHPVVQTLVGKIEDRRIITYGENPQADARLLDLAASGGGSTFKVAFRDRKAGTAHEIADLKLPMPGRHNALNATAAIAVAHELGLSDDTIRKALAAFGGVRRRFTKTGEWNGVTIIDDYGHHPVEIAAVLKAARQSTSGKVIAVVQPHRFSRLQSLFEEFCTCFNDADAVIVADVYPAGEAPIEGIDRDHFVLGLRAHGHRDVVALQDSASLAGVVAGLAHSGDYVVCLGAGNITQWAYALPGELKALG.

114-120 (GTHGKTT) provides a ligand contact to ATP.

Belongs to the MurCDEF family.

The protein localises to the cytoplasm. The enzyme catalyses UDP-N-acetyl-alpha-D-muramate + L-alanine + ATP = UDP-N-acetyl-alpha-D-muramoyl-L-alanine + ADP + phosphate + H(+). It participates in cell wall biogenesis; peptidoglycan biosynthesis. Functionally, cell wall formation. In Rhodopseudomonas palustris (strain TIE-1), this protein is UDP-N-acetylmuramate--L-alanine ligase.